The sequence spans 473 residues: Sarcalumenin (473 aa).

A signal peptide spans methionine 1–alanine 20. Residues isoleucine 90–alanine 331 enclose the Dynamin-type G domain. Residues glycine 100 to serine 107 form a G1 motif region. Residues glutamate 128–proline 129 are G2 motif. The interval aspartate 190–glycine 193 is G3 motif. Residues asparagine 255–aspartate 258 form a G4 motif region. A region of interest (G5 motif) is located at residue proline 278. N-linked (GlcNAc...) asparagine glycans are attached at residues asparagine 281 and asparagine 389.

This sequence belongs to the TRAFAC class dynamin-like GTPase superfamily. Dynamin/Fzo/YdjA family. N-glycosylated.

It is found in the sarcoplasmic reticulum lumen. The protein resides in the sarcoplasmic reticulum membrane. In Homo sapiens (Human), this protein is Sarcalumenin (SRL).